We begin with the raw amino-acid sequence, 220 residues long: Deoxyribose-phosphate aldolase (220 aa).

Asp89 acts as the Proton donor/acceptor in catalysis. Lys151 (schiff-base intermediate with acetaldehyde) is an active-site residue. The active-site Proton donor/acceptor is Lys180.

Belongs to the DeoC/FbaB aldolase family. DeoC type 1 subfamily.

It localises to the cytoplasm. It catalyses the reaction 2-deoxy-D-ribose 5-phosphate = D-glyceraldehyde 3-phosphate + acetaldehyde. It participates in carbohydrate degradation; 2-deoxy-D-ribose 1-phosphate degradation; D-glyceraldehyde 3-phosphate and acetaldehyde from 2-deoxy-alpha-D-ribose 1-phosphate: step 2/2. Its function is as follows. Catalyzes a reversible aldol reaction between acetaldehyde and D-glyceraldehyde 3-phosphate to generate 2-deoxy-D-ribose 5-phosphate. This chain is Deoxyribose-phosphate aldolase, found in Streptococcus pneumoniae (strain Hungary19A-6).